Reading from the N-terminus, the 101-residue chain is Apolipoprotein C-II (101 aa).

Residues 1–22 form the signal peptide; sequence MGIRYLLVLVLVLLVLGCEVQG. Residues 66-74 form a lipid binding region; that stretch reads TMDEKIREI. The lipoprotein lipase cofactor stretch occupies residues 78–101; sequence STAAVSTYAGIFTDQLLSMLKGDQ.

This sequence belongs to the apolipoprotein C2 family. Proapolipoprotein C-II is synthesized as a sialic acid containing glycoprotein which is subsequently desialylated prior to its proteolytic processing. Post-translationally, proapolipoprotein C-II, the major form found in plasma undergoes proteolytic cleavage of its N-terminal hexapeptide to generate apolipoprotein C-II, which occurs as the minor form in plasma.

It localises to the secreted. In terms of biological role, component of chylomicrons, very low-density lipoproteins (VLDL), low-density lipoproteins (LDL), and high-density lipoproteins (HDL) in plasma. Plays an important role in lipoprotein metabolism as an activator of lipoprotein lipase. Both proapolipoprotein C-II and apolipoprotein C-II can activate lipoprotein lipase. The sequence is that of Apolipoprotein C-II (APOC2) from Leptonychotes weddellii (Weddell seal).